The following is a 1643-amino-acid chain: Lysine-specific demethylase 6B (1643 aa).

Disordered stretches follow at residues 52–88, 190–680, 704–807, and 822–1096; these read GQPP…PLHG, AKRG…PLED, ESIR…LKSL, and GAAV…RSLS. Composition is skewed to low complexity over residues 63–74 and 212–223; these read SHGSSSGHPSKP and AALSGPSGEEGL. Serine 224 carries the post-translational modification Phosphoserine. Positions 242 to 266 are enriched in pro residues; that stretch reads PGLPLPPPPLPPPPPPPPPPPPPLP. Residues 291–307 are compositionally biased toward basic and acidic residues; the sequence is GPERKGSAPPERQEQRH. The segment covering 332–342 has biased composition (pro residues); that stretch reads AAPPGPGPRPP. The span at 359 to 370 shows a compositional bias: basic and acidic residues; sequence DLRESRVQRSRM. The segment covering 394 to 412 has biased composition (low complexity); it reads PGTTTSSSSSSSSNTGLRG. Residues 460-484 are compositionally biased toward pro residues; it reads SLPPGPSSPPPPPCPRLLRPPPPPA. Positions 550-569 are enriched in low complexity; the sequence is TTSSSNSNSGSHSSSPAGPV. Pro residues-rich tracts occupy residues 584-600 and 641-658; these read LPRP…PPLV and GPGP…PVPP. Residues 704–714 are compositionally biased toward basic and acidic residues; the sequence is ESIRKEEEQQQ. Over residues 740-764 the composition is skewed to low complexity; it reads TAPTTTAPAVAVTTTTTTTTTTTAT. Residues 772–800 are compositionally biased toward pro residues; that stretch reads PPALPPPPPLAKFPPPSQPQPPPPPPPSP. Residues 843-877 show a composition bias toward low complexity; it reads SGATALPPTSAAPSAQGSPQPSASSSSQFSTSGGP. Pro residues predominate over residues 889-904; that stretch reads VPGPMTPTQPPPPLSL. A compositionally biased stretch (basic and acidic residues) spans 916–929; that stretch reads EISRACETLVERVG. The segment covering 972–989 has biased composition (basic residues); sequence CKRRQKEHQKEHRRHRRA. Positions 990–1003 are enriched in basic and acidic residues; the sequence is CKDSVGRRPREGRA. A compositionally biased stretch (basic residues) spans 1004–1016; that stretch reads KAKAKVPKEKSRR. Pro residues predominate over residues 1047–1067; it reads PTAPAPPSAPAPSAQPTPPSA. Lysine 1109 participates in a covalent cross-link: Glycyl lysine isopeptide (Lys-Gly) (interchain with G-Cter in SUMO2). The interval 1288–1325 is disordered; that stretch reads FQESLQEEKESEDEESEEPDSTTGTPPSSAPDPKNHHI. Acidic residues predominate over residues 1296–1307; sequence KESEDEESEEPD. The JmjC domain occupies 1339 to 1502; the sequence is RWKPQLQELL…YQLALERYEW (164 aa). Residues histidine 1390, glutamate 1392, and histidine 1470 each contribute to the Fe cation site. Cysteine 1575, cysteine 1578, cysteine 1602, and cysteine 1605 together coordinate Zn(2+).

The protein belongs to the UTX family. As to quaternary structure, interacts with TLE1. Component of the MLL4 complex, at least composed of KMT2B/MLL4, ASH2L, RBBP5, WDR5, and KDM6B. Interacts with TBX21, SMARCA4, SMARCC1 and SMARCC2. L-ascorbate is required as a cofactor. Requires Fe(2+) as cofactor.

It localises to the nucleus. It carries out the reaction N(6),N(6),N(6)-trimethyl-L-lysyl(27)-[histone H3] + 2 2-oxoglutarate + 2 O2 = N(6)-methyl-L-lysyl(27)-[histone H3] + 2 formaldehyde + 2 succinate + 2 CO2. In terms of biological role, histone demethylase that specifically demethylates 'Lys-27' of histone H3, thereby playing a central role in histone code. Demethylates trimethylated and dimethylated H3 'Lys-27'. Plays a central role in regulation of posterior development, by regulating HOX gene expression. Involved in inflammatory response by participating in macrophage differentiation in case of inflammation by regulating gene expression and macrophage differentiation. Plays a demethylase-independent role in chromatin remodeling to regulate T-box family member-dependent gene expression by acting as a link between T-box factors and the SMARCA4-containing SWI/SNF remodeling complex. In Homo sapiens (Human), this protein is Lysine-specific demethylase 6B (KDM6B).